A 194-amino-acid polypeptide reads, in one-letter code: MAENLAGNDRLIWIDLEMTGLDTDRDSIIEIATIVTDAQLNVLAEGPELAIAHPLETLEAMDEWNRNQHRRSGLWQRVIDSQVTHAQAEAQTVAFLSEWIRAGASPMCGNSICQDRRFLHRQMSRLERYFHYRNLDVSTIKELARRWAPTVANGFAKSSAHTALSDVRDSIDELRHYRQFMGALGGDTAAGVEN.

Positions 11–174 constitute an Exonuclease domain; that stretch reads LIWIDLEMTG…SDVRDSIDEL (164 aa). Tyr132 is a catalytic residue.

It belongs to the oligoribonuclease family.

It is found in the cytoplasm. 3'-to-5' exoribonuclease specific for small oligoribonucleotides. The protein is Oligoribonuclease of Xanthomonas axonopodis pv. citri (strain 306).